Here is a 338-residue protein sequence, read N- to C-terminus: Lipoate-protein ligase A (338 aa).

The BPL/LPL catalytic domain maps to 29 to 216; sequence PATQRVLFLW…AFFAHYGERI (188 aa). Residues Arg-71, 76 to 79, and Lys-134 contribute to the ATP site; that span reads GAVF. (R)-lipoate is bound at residue Lys-134.

Belongs to the LplA family. Monomer.

It localises to the cytoplasm. The catalysed reaction is L-lysyl-[lipoyl-carrier protein] + (R)-lipoate + ATP = N(6)-[(R)-lipoyl]-L-lysyl-[lipoyl-carrier protein] + AMP + diphosphate + H(+). Its pathway is protein modification; protein lipoylation via exogenous pathway; protein N(6)-(lipoyl)lysine from lipoate: step 1/2. The protein operates within protein modification; protein lipoylation via exogenous pathway; protein N(6)-(lipoyl)lysine from lipoate: step 2/2. Its function is as follows. Catalyzes both the ATP-dependent activation of exogenously supplied lipoate to lipoyl-AMP and the transfer of the activated lipoyl onto the lipoyl domains of lipoate-dependent enzymes. This chain is Lipoate-protein ligase A, found in Salmonella paratyphi A (strain ATCC 9150 / SARB42).